Consider the following 325-residue polypeptide: Probable isoaspartyl peptidase/L-asparaginase GA20639 (325 aa).

T184 (nucleophile) is an active-site residue. Substrate contacts are provided by residues 212-215 (RIGD) and 235-238 (TGHG).

It belongs to the Ntn-hydrolase family. Heterodimer of an alpha and beta chain produced by autocleavage. In terms of processing, cleaved into an alpha and beta chain by autocatalysis; this activates the enzyme. The N-terminal residue of the beta subunit is responsible for the nucleophile hydrolase activity.

It carries out the reaction L-asparagine + H2O = L-aspartate + NH4(+). The enzyme catalyses Cleavage of a beta-linked Asp residue from the N-terminus of a polypeptide.. Functionally, has both L-asparaginase and beta-aspartyl peptidase activity. Does not have aspartylglucosaminidase activity and is inactive toward GlcNAc-L-Asn. Likewise, has no activity toward glutamine. The polypeptide is Probable isoaspartyl peptidase/L-asparaginase GA20639 (Drosophila pseudoobscura pseudoobscura (Fruit fly)).